Reading from the N-terminus, the 105-residue chain is Urease subunit beta (105 aa).

It belongs to the urease beta subunit family. Heterotrimer of UreA (gamma), UreB (beta) and UreC (alpha) subunits. Three heterotrimers associate to form the active enzyme.

It is found in the cytoplasm. The enzyme catalyses urea + 2 H2O + H(+) = hydrogencarbonate + 2 NH4(+). The protein operates within nitrogen metabolism; urea degradation; CO(2) and NH(3) from urea (urease route): step 1/1. The polypeptide is Urease subunit beta (Pseudomonas entomophila (strain L48)).